We begin with the raw amino-acid sequence, 274 residues long: MLKLLLLLALSPLASLVHAAPCPVKQRVGIVGGREASESKWPWQVSLRFKFSFWMHFCGGSLIHPQWVLTAAHCVGLHIKSPELFRVQLREQYLYYADQLLTVNRTVVHPHYYTVEDGADIALLELEIPVNVSTHIHPISLPPASETFPSGTSCWVTGWGDIDSDEPLLPPYPLKQVKVPIVENSLCDRKYHTGLYTGDDVPIVQDGMLCAGNTRSDSCQGDSGGPLVCKVKGTWLQAGVVSWGEGCAEANRPGIYTRVTYYLDWIHRYVPQRS.

Residues 1-19 form the signal peptide; sequence MLKLLLLLALSPLASLVHA. Positions 20–29 are cleaved as a propeptide — activation peptide; sequence APCPVKQRVG. The region spanning 30 to 271 is the Peptidase S1 domain; it reads IVGGREASES…YLDWIHRYVP (242 aa). The cysteines at positions 58 and 74 are disulfide-linked. His73 serves as the catalytic Charge relay system. Tyr96 carries the phosphotyrosine modification. N-linked (GlcNAc...) asparagine glycosylation occurs at Asn104. The active-site Charge relay system is Asp120. Asn131 carries an N-linked (GlcNAc...) asparagine glycan. 3 disulfides stabilise this stretch: Cys154–Cys229, Cys187–Cys210, and Cys219–Cys247. Residue Ser223 is the Charge relay system of the active site.

It belongs to the peptidase S1 family. Tryptase subfamily. In terms of assembly, homotetramer. The active tetramer is converted to inactive monomers at neutral and acidic pH in the absence of heparin. Low concentrations of inactive monomers become active monomers at pH 6.0 in the presence of heparin. When the concentration of active monomers is higher, they convert to active monomers and then to active tetramers. These monomers are active and functionally distinct from the tetrameric enzyme. In contrast to the hidden active sites in the tetrameric form, the active site of the monomeric form is accessible for macromolecular proteins and inhibitors, e.g. fibrinogen which is a substrate for the monomeric but not for the tetrameric form. The monomeric form forms a complex with SERPINB6.

It localises to the secreted. The enzyme catalyses Preferential cleavage: Arg-|-Xaa, Lys-|-Xaa, but with more restricted specificity than trypsin.. In terms of biological role, tryptase is the major neutral protease present in mast cells and is secreted upon the coupled activation-degranulation response of this cell type. Plays a role in innate immunity. In Rattus norvegicus (Rat), this protein is Tryptase beta-2 (Tpsb2).